A 335-amino-acid chain; its full sequence is MAASLGFRGAASGLWYWSGRRRPVGSLAAVCSRSMASKTPVGFIGLGNMGNPMAKNLMKHGYPLILYDVFPDVCKEFKEAGEQVASSPAEVAEKADRIITMLPSSMNAVEVYSGANGILKKVKKGSLLIDSSTIDPSVSKELAKEVEKMGAVFMDAPVSGGVGAARSGNLTFMVGGVEDEFAAAQELLECMGSNVVYCGAVGTGQSAKICNNMLLAISMIGTAEAMNLGIRSGLDPKLLAKILNMSSGRCWSSDTYNPVPGVMHGVPSSNNYQGGFGTTLMAKDLGLAQDSATSTKTPILLGSLAHQIYRMMCSKGYSKKDFSSVFQYLREEEPF.

A mitochondrion-targeting transit peptide spans Met1–Met35. Position 39–68 (Thr39–Asp68) interacts with NAD(+). Lys59, Lys75, and Lys78 each carry N6-acetyllysine; alternate. N6-succinyllysine; alternate is present on residues Lys59, Lys75, and Lys78. N6-succinyllysine is present on Lys94. NAD(+) contacts are provided by residues Leu102–Pro103 and Asn107. Lys120 is modified (N6-acetyllysine). Thr133 lines the NAD(+) pocket. Lys140 carries the post-translational modification N6-succinyllysine. N6-acetyllysine is present on Lys144. Lys148 bears the N6-acetyllysine; alternate mark. At Lys148 the chain carries N6-succinyllysine; alternate. The active site involves Lys208. N6-acetyllysine; alternate is present on residues Lys237 and Lys241. An N6-succinyllysine; alternate mark is found at Lys237 and Lys241. Lys283 is an NAD(+) binding site. Lys296 bears the N6-succinyllysine mark. Lys320 carries the N6-acetyllysine; alternate modification. N6-succinyllysine; alternate is present on Lys320.

Belongs to the HIBADH-related family. 3-hydroxyisobutyrate dehydrogenase subfamily. Homodimer.

The protein resides in the mitochondrion. It catalyses the reaction 3-hydroxy-2-methylpropanoate + NAD(+) = 2-methyl-3-oxopropanoate + NADH + H(+). It participates in amino-acid degradation; L-valine degradation. The chain is 3-hydroxyisobutyrate dehydrogenase, mitochondrial (Hibadh) from Mus musculus (Mouse).